A 195-amino-acid polypeptide reads, in one-letter code: ATP-dependent Clp protease proteolytic subunit (195 aa).

S98 acts as the Nucleophile in catalysis. H123 is a catalytic residue.

It belongs to the peptidase S14 family. As to quaternary structure, fourteen ClpP subunits assemble into 2 heptameric rings which stack back to back to give a disk-like structure with a central cavity, resembling the structure of eukaryotic proteasomes.

It is found in the cytoplasm. It carries out the reaction Hydrolysis of proteins to small peptides in the presence of ATP and magnesium. alpha-casein is the usual test substrate. In the absence of ATP, only oligopeptides shorter than five residues are hydrolyzed (such as succinyl-Leu-Tyr-|-NHMec, and Leu-Tyr-Leu-|-Tyr-Trp, in which cleavage of the -Tyr-|-Leu- and -Tyr-|-Trp bonds also occurs).. Functionally, cleaves peptides in various proteins in a process that requires ATP hydrolysis. Has a chymotrypsin-like activity. Plays a major role in the degradation of misfolded proteins. This chain is ATP-dependent Clp protease proteolytic subunit, found in Staphylococcus haemolyticus (strain JCSC1435).